Reading from the N-terminus, the 338-residue chain is Mitochondrial E3 ubiquitin protein ligase 1 (338 aa).

Residues 1–3 (MEF) are Cytoplasmic-facing. Residues 4-24 (LHESVALGVDLLILGLCAREY) form a helical membrane-spanning segment. Over 25-227 (VHYKRTAKVL…LIKRFEDAKT (203 aa)) the chain is Mitochondrial intermembrane. The chain crosses the membrane as a helical span at residues 228 to 248 (TTILKLVVCSTISAILVAFIA). The Cytoplasmic segment spans residues 249 to 338 (KKLYRKRKQE…IVSKAAAFIA (90 aa)). An RING-type zinc finger spans residues 290-326 (CVVCSTNPKEIILLPCGHVCLCEDCAQKISVTCPVCR).

Interacts with Marf. In terms of processing, auto-ubiquitinated.

It localises to the mitochondrion outer membrane. The enzyme catalyses S-ubiquitinyl-[E2 ubiquitin-conjugating enzyme]-L-cysteine + [acceptor protein]-L-lysine = [E2 ubiquitin-conjugating enzyme]-L-cysteine + N(6)-ubiquitinyl-[acceptor protein]-L-lysine.. In terms of biological role, exhibits weak E3 ubiquitin-protein ligase activity. E3 ubiquitin ligases accept ubiquitin from an E2 ubiquitin-conjugating enzyme in the form of a thioester and then directly transfer the ubiquitin to targeted substrates. Plays a role in the control of mitochondrial morphology by promoting mitochondrial fission. Negatively regulates the mitochondrial fusion protein marf by promoting its ubiquitination, acting in a pathway that is parallel to the park/pink1 regulatory pathway. This Drosophila melanogaster (Fruit fly) protein is Mitochondrial E3 ubiquitin protein ligase 1.